We begin with the raw amino-acid sequence, 230 residues long: Orotidine 5'-phosphate decarboxylase (230 aa).

Residues D10, K31, 58–67, T117, R179, Q188, G208, and R209 contribute to the substrate site; that span reads DLKLHDIPNT. The active-site Proton donor is K60.

It belongs to the OMP decarboxylase family. Type 1 subfamily. As to quaternary structure, homodimer.

The enzyme catalyses orotidine 5'-phosphate + H(+) = UMP + CO2. Its pathway is pyrimidine metabolism; UMP biosynthesis via de novo pathway; UMP from orotate: step 2/2. Its function is as follows. Catalyzes the decarboxylation of orotidine 5'-monophosphate (OMP) to uridine 5'-monophosphate (UMP). This is Orotidine 5'-phosphate decarboxylase from Staphylococcus aureus (strain bovine RF122 / ET3-1).